Here is a 303-residue protein sequence, read N- to C-terminus: Ornithine carbamoyltransferase (303 aa).

Residues 53 to 56 (STRT), Q80, R104, and 131 to 134 (HPCQ) each bind carbamoyl phosphate. L-ornithine is bound by residues N162, D222, and 226–227 (SM). Carbamoyl phosphate-binding positions include 261 to 262 (CL) and R289.

It belongs to the aspartate/ornithine carbamoyltransferase superfamily. OTCase family.

It localises to the cytoplasm. The enzyme catalyses carbamoyl phosphate + L-ornithine = L-citrulline + phosphate + H(+). The protein operates within amino-acid biosynthesis; L-arginine biosynthesis; L-arginine from L-ornithine and carbamoyl phosphate: step 1/3. Functionally, reversibly catalyzes the transfer of the carbamoyl group from carbamoyl phosphate (CP) to the N(epsilon) atom of ornithine (ORN) to produce L-citrulline. The protein is Ornithine carbamoyltransferase of Mesorhizobium japonicum (strain LMG 29417 / CECT 9101 / MAFF 303099) (Mesorhizobium loti (strain MAFF 303099)).